Here is a 228-residue protein sequence, read N- to C-terminus: Claudin-10 (228 aa).

The chain crosses the membrane as a helical span at residues 1–21; sequence MASTASEIIAFMVSISGWVLV. Topologically, residues 22-80 are extracellular; that stretch reads SSTLPTDYWKVSTIDGTVITTATYWANLWKACVTDSTGVSNCKDFPSMLALDGYIQACR. Residues 81–101 traverse the membrane as a helical segment; that stretch reads GLMIAAVSLGFFGSIFALFGM. Over 102–115 the chain is Cytoplasmic; it reads KCTKVGGSDKAKAK. A helical membrane pass occupies residues 116–136; the sequence is IACLAGIVFILSGLCSMTGCS. The Extracellular segment spans residues 137–160; the sequence is LYANKITTEFFDPLFVEQKYELGA. The chain crosses the membrane as a helical span at residues 161–181; that stretch reads ALFIGWAGASLCIIGGVIFCF. Topologically, residues 182–228 are cytoplasmic; sequence SISDNNKTPRYAYNGATSVMSSRTKYHGGEDFKTTNPSKQFDKNAYV.

It belongs to the claudin family. As to quaternary structure, can form homodimers both in trans (interaction between CLDN10 molecules in opposing membranes) and in cis (interaction between CLDN10 molecules within one membrane). Interacts with CLDN19.

The protein resides in the cell junction. It localises to the tight junction. Its subcellular location is the cell membrane. It catalyses the reaction Na(+)(in) = Na(+)(out). The catalysed reaction is Li(+)(in) = Li(+)(out). The enzyme catalyses K(+)(in) = K(+)(out). It carries out the reaction Rb(+)(in) = Rb(+)(out). It catalyses the reaction Cs(+)(in) = Cs(+)(out). The catalysed reaction is NH4(+)(in) = NH4(+)(out). The enzyme catalyses methylamine(out) = methylamine(in). It carries out the reaction Mg(2+)(in) = Mg(2+)(out). It catalyses the reaction Ca(2+)(in) = Ca(2+)(out). The catalysed reaction is Sr(2+)(in) = Sr(2+)(out). The enzyme catalyses chloride(in) = chloride(out). It carries out the reaction nitrate(in) = nitrate(out). In terms of biological role, forms paracellular channels: polymerizes in tight junction strands with cation- and anion-selective channels through the strands, conveying epithelial permeability in a process known as paracellular tight junction permeability. In sweat glands and in the thick ascending limb (TAL) of Henle's loop in kidney, it controls paracellular sodium permeability which is essential for proper sweat production and renal function. In renal proximal tubules, it conveys selective chloride over hydrogencarbonate anion permeability which is required for renal chloride reabsorption and salt homeostasis. The sequence is that of Claudin-10 (CLDN10) from Pongo abelii (Sumatran orangutan).